The primary structure comprises 483 residues: MVAVKEATNVGKITQVIGPVIDAQFPSGKLPRIYNALKVQGRNSAGNEVAVTCEVQQLLGDNQVRAVAMSSTDGLVRGMDVVDTGAPISVPVGTGTLGRIFNVLGEPVDNKGPVPAGETFPIHRPAPKLVDLETKPQVFETGIKVIDLLTPYRQGGKIGLFGGAGVGKTVIMMELINNIAIQHGGVSVFGGVGERTREGNDLYNEMIESNVINADKPEESKIALVYGQMNEPPGARMRVGLTALTMAEYFRDVNKQDVLLFIDNIFRFVQAGSEVSALLGRMPSAVGYQPTLGTDVGDLQERITSTKEGSITSIQAVYVPADDLTDPAPATTFAHLDGTTVLSRGLAAKGIYPAVDPLDSTSTMLQPSIVGSEHYDTAREVQSTLQRYKELQDIIAILGLDELSEEDRLTVDRARKIERFLSQPFFVAEVFTGAPGKYVSLADTIKGFKAILAGELDDLPEQAFYLVGDIEEAKAKGAKLKEG.

162–169 (GGAGVGKT) serves as a coordination point for ATP.

The protein belongs to the ATPase alpha/beta chains family. F-type ATPases have 2 components, CF(1) - the catalytic core - and CF(0) - the membrane proton channel. CF(1) has five subunits: alpha(3), beta(3), gamma(1), delta(1), epsilon(1). CF(0) has four main subunits: a(1), b(1), b'(1) and c(9-12).

The protein localises to the cellular thylakoid membrane. The catalysed reaction is ATP + H2O + 4 H(+)(in) = ADP + phosphate + 5 H(+)(out). Functionally, produces ATP from ADP in the presence of a proton gradient across the membrane. The catalytic sites are hosted primarily by the beta subunits. This Synechocystis sp. (strain ATCC 27184 / PCC 6803 / Kazusa) protein is ATP synthase subunit beta.